A 261-amino-acid chain; its full sequence is Hemin import ATP-binding protein HmuV (261 aa).

Positions 3–239 constitute an ABC transporter domain; the sequence is LDAADITVKL…AILSQAYGCA (237 aa). 35–42 lines the ATP pocket; sequence GPNGSGKT.

The protein belongs to the ABC transporter superfamily. Heme (hemin) importer (TC 3.A.1.14.5) family. As to quaternary structure, the complex is composed of two ATP-binding proteins (HmuV), two transmembrane proteins (HmuU) and a solute-binding protein (HmuT).

The protein localises to the cell inner membrane. Part of the ABC transporter complex HmuTUV involved in hemin import. Responsible for energy coupling to the transport system. This Roseobacter denitrificans (strain ATCC 33942 / OCh 114) (Erythrobacter sp. (strain OCh 114)) protein is Hemin import ATP-binding protein HmuV.